Reading from the N-terminus, the 239-residue chain is Fatty acid metabolism regulator protein (239 aa).

Positions 6-74 (QSPAGFAEEY…HGKPTKVNNF (69 aa)) constitute an HTH gntR-type domain. Residues 34–53 (ERELSELIGVTRTTLREVLQ) constitute a DNA-binding region (H-T-H motif).

As to quaternary structure, homodimer.

It localises to the cytoplasm. Functionally, multifunctional regulator of fatty acid metabolism. This is Fatty acid metabolism regulator protein from Yersinia pseudotuberculosis serotype O:1b (strain IP 31758).